The primary structure comprises 375 residues: Queuine tRNA-ribosyltransferase (375 aa).

Aspartate 89 acts as the Proton acceptor in catalysis. Substrate contacts are provided by residues 89–93 (DSGGF), aspartate 143, glutamine 187, and glycine 214. Residues 245–251 (GVGKPED) are RNA binding. The active-site Nucleophile is the aspartate 264. Positions 269–273 (TRNAR) are RNA binding; important for wobble base 34 recognition. Zn(2+) is bound by residues cysteine 302, cysteine 304, cysteine 307, and histidine 333.

This sequence belongs to the queuine tRNA-ribosyltransferase family. Homodimer. Within each dimer, one monomer is responsible for RNA recognition and catalysis, while the other monomer binds to the replacement base PreQ1. It depends on Zn(2+) as a cofactor.

It catalyses the reaction 7-aminomethyl-7-carbaguanine + guanosine(34) in tRNA = 7-aminomethyl-7-carbaguanosine(34) in tRNA + guanine. It participates in tRNA modification; tRNA-queuosine biosynthesis. Its function is as follows. Catalyzes the base-exchange of a guanine (G) residue with the queuine precursor 7-aminomethyl-7-deazaguanine (PreQ1) at position 34 (anticodon wobble position) in tRNAs with GU(N) anticodons (tRNA-Asp, -Asn, -His and -Tyr). Catalysis occurs through a double-displacement mechanism. The nucleophile active site attacks the C1' of nucleotide 34 to detach the guanine base from the RNA, forming a covalent enzyme-RNA intermediate. The proton acceptor active site deprotonates the incoming PreQ1, allowing a nucleophilic attack on the C1' of the ribose to form the product. After dissociation, two additional enzymatic reactions on the tRNA convert PreQ1 to queuine (Q), resulting in the hypermodified nucleoside queuosine (7-(((4,5-cis-dihydroxy-2-cyclopenten-1-yl)amino)methyl)-7-deazaguanosine). The sequence is that of Queuine tRNA-ribosyltransferase from Escherichia coli O81 (strain ED1a).